The chain runs to 294 residues: MARGPNRRRVDRVPGERRRRLARAMALALPSILALAALGGAATLGWRVGWKSDLLRVREIRFEGLSRATPQELLDLSPVQPGDHLLFLDTDAMAAALRRHPWIASAQVRRTFPPALEVQLAERRPAALVDLGGLYLVDDRGEVFKRAVPGDGLDLPVITGIEREAWAEGRGELAPLLGGALALLGRWSARGLDARSTISEIHVDPEYGTTLWSDEGTEIRLGQGDLEEKLTRLHRVLSALDAEGERAEVLHLDNRRRPDWVAVRVAGRRGEPDGRSSYAAGGGGGPQGRSSSLR.

The Cytoplasmic segment spans residues 1–26; sequence MARGPNRRRVDRVPGERRRRLARAMA. A helical membrane pass occupies residues 27–49; sequence LALPSILALAALGGAATLGWRVG. At 50–294 the chain is on the periplasmic side; it reads WKSDLLRVRE…GPQGRSSSLR (245 aa). A POTRA domain is found at 55-123; the sequence is LRVREIRFEG…PALEVQLAER (69 aa). The disordered stretch occupies residues 266-294; that stretch reads AGRRGEPDGRSSYAAGGGGGPQGRSSSLR.

The protein belongs to the FtsQ/DivIB family. FtsQ subfamily.

It is found in the cell inner membrane. Functionally, essential cell division protein. The chain is Cell division protein FtsQ from Anaeromyxobacter sp. (strain K).